A 435-amino-acid polypeptide reads, in one-letter code: Phospholipase A1 EG1, chloroplastic/mitochondrial (435 aa).

A chloroplast and mitochondrion-targeting transit peptide spans Met-1–Gly-31. The short motif at Gly-264–Gly-268 is the GXSXG element. The active-site Acyl-ester intermediate is the Ser-266. Residues Asp-324 and His-371 each act as charge relay system in the active site.

The protein belongs to the AB hydrolase superfamily. Lipase family.

The protein localises to the mitochondrion. The protein resides in the plastid. It localises to the chloroplast. It carries out the reaction a 1,2-diacyl-sn-glycero-3-phosphocholine + H2O = a 2-acyl-sn-glycero-3-phosphocholine + a fatty acid + H(+). Functionally, phospholipase that releases free fatty acids from phospholipids. Catalyzes the initial step of jasmonate (JA) biosynthesis. Required for the biosynthesis of endogenous JA in seedling, inflorescence and spikelets. Not essential for JA biosynthesis after wounding. Mediates spikelet development and specification of empty-glume identity. Functions in a high temperature-dependent manner to maintain floral developmental robustness under heat stress conditions. Functions by safeguarding the expression of several floral identity genes, such as MADS1, MADS6 and G1. The protein is Phospholipase A1 EG1, chloroplastic/mitochondrial of Oryza sativa subsp. indica (Rice).